A 140-amino-acid polypeptide reads, in one-letter code: 3-hydroxyacyl-[acyl-carrier-protein] dehydratase FabZ (140 aa).

Residue histidine 48 is part of the active site.

Belongs to the thioester dehydratase family. FabZ subfamily.

It localises to the cytoplasm. The catalysed reaction is a (3R)-hydroxyacyl-[ACP] = a (2E)-enoyl-[ACP] + H2O. In terms of biological role, involved in unsaturated fatty acids biosynthesis. Catalyzes the dehydration of short chain beta-hydroxyacyl-ACPs and long chain saturated and unsaturated beta-hydroxyacyl-ACPs. This is 3-hydroxyacyl-[acyl-carrier-protein] dehydratase FabZ from Latilactobacillus sakei subsp. sakei (strain 23K) (Lactobacillus sakei subsp. sakei).